Reading from the N-terminus, the 173-residue chain is Probable lipoprotein EnvE (173 aa).

The first 20 residues, 1-20, serve as a signal peptide directing secretion; it reads MTLLSGKTTLVLCLSSILCG. A lipid anchor (N-palmitoyl cysteine) is attached at cysteine 21. A lipid anchor (S-diacylglycerol cysteine) is attached at cysteine 21.

It localises to the cell membrane. This chain is Probable lipoprotein EnvE (envE), found in Salmonella typhimurium (strain LT2 / SGSC1412 / ATCC 700720).